Here is a 227-residue protein sequence, read N- to C-terminus: Type II restriction enzyme ScaI (227 aa).

The tract at residues Glu-12–Gly-35 is disordered.

It catalyses the reaction Endonucleolytic cleavage of DNA to give specific double-stranded fragments with terminal 5'-phosphates.. Its function is as follows. A P subtype restriction enzyme that recognizes the double-stranded sequence 5'-AGTACT-3' and cleaves after T-3. The polypeptide is Type II restriction enzyme ScaI (Streptomyces caespitosus).